The sequence spans 235 residues: U1 small nuclear ribonucleoprotein C (235 aa).

The Matrin-type zinc finger occupies 4–36; it reads YYCEYCDIYLTHSSPVGRRQHIHGRKHISAKIE. The tract at residues 131 to 235 is disordered; the sequence is QAHNNYSYPN…SKEHIESDIS (105 aa). Positions 134 to 168 are enriched in low complexity; it reads NNYSYPNSINPSNQINYSNNYGSNNFNNSNEFNKN. Basic and acidic residues predominate over residues 169-189; it reads MNEKDNINNNDIHDNKVKTDE. The span at 192–203 shows a compositional bias: low complexity; sequence PINNDNLNNTRN. Composition is skewed to basic and acidic residues over residues 205–217 and 225–235; these read SYEENHYSTDHKK and NSKEHIESDIS.

The protein belongs to the U1 small nuclear ribonucleoprotein C family. In terms of assembly, U1 snRNP is composed of the 7 core Sm proteins B/B', D1, D2, D3, E, F and G that assemble in a heptameric protein ring on the Sm site of the small nuclear RNA to form the core snRNP, and at least 3 U1 snRNP-specific proteins U1-70K, U1-A and U1-C. U1-C interacts with U1 snRNA and the 5' splice-site region of the pre-mRNA.

The protein localises to the nucleus. Its function is as follows. Component of the spliceosomal U1 snRNP, which is essential for recognition of the pre-mRNA 5' splice-site and the subsequent assembly of the spliceosome. U1-C is directly involved in initial 5' splice-site recognition for both constitutive and regulated alternative splicing. The interaction with the 5' splice-site seems to precede base-pairing between the pre-mRNA and the U1 snRNA. Stimulates commitment or early (E) complex formation by stabilizing the base pairing of the 5' end of the U1 snRNA and the 5' splice-site region. The chain is U1 small nuclear ribonucleoprotein C from Plasmodium falciparum (isolate 3D7).